The chain runs to 770 residues: Endothelin-converting enzyme 1 (770 aa).

At 1 to 68 (MRGVWPPPVS…WAARTQVEKR (68 aa)) the chain is on the cytoplasmic side. At T25 the chain carries Phosphothreonine. The chain crosses the membrane as a helical; Signal-anchor for type II membrane protein span at residues 69 to 89 (LVVLVVLLAAGLVACLAALGI). The Extracellular portion of the chain corresponds to 90–770 (QYQTRSPSVC…MNPPHKCEVW (681 aa)). The Peptidase M13 domain maps to 98 to 770 (VCLSEACVSV…MNPPHKCEVW (673 aa)). 5 disulfides stabilise this stretch: C99–C104, C122–C755, C130–C715, C185–C435, and C644–C767. Residues N166, N187, N210, N270, N316, N362, N383, and N539 are each glycosylated (N-linked (GlcNAc...) asparagine). H607 contributes to the Zn(2+) binding site. Residue E608 is part of the active site. H611 contributes to the Zn(2+) binding site. N-linked (GlcNAc...) asparagine glycosylation is found at N632 and N651. E667 contacts Zn(2+). D671 functions as the Proton donor in the catalytic mechanism.

The protein belongs to the peptidase M13 family. In terms of assembly, homodimer; disulfide-linked. Interacts with PPP1R16B. Interacts with TSPAN8; this interaction recruits the endothelin converting enzyme ECE1 to tetraspanin-enriched microdomains and positively modulates its enzymatic activity. It depends on Zn(2+) as a cofactor. All isoforms are expressed in umbilical vein endothelial cells, polynuclear neutrophils, fibroblasts, atrium cardiomyocytes and ventricles. Isoforms A, B and C are also expressed in placenta, lung, heart, adrenal gland and phaeochromocytoma; isoforms A and C in liver, testis and small intestine; isoform B, C and D in endothelial cells and umbilical vein smooth muscle cells; isoforms C and D in saphenous vein cells, and isoform C in kidney.

The protein resides in the cell membrane. It catalyses the reaction Hydrolysis of the 21-Trp-|-Val-22 bond in big endothelin to form endothelin 1.. Its activity is regulated as follows. Inhibited by phosphoramidon. Activated by K49-P1-20, a twenty-residue synthetic peptide shortened from the snake B.asper myotoxin II. Functionally, converts big endothelin-1 to endothelin-1. The protein is Endothelin-converting enzyme 1 (ECE1) of Homo sapiens (Human).